The primary structure comprises 394 residues: Probable fatty acyl-CoA transferase Rv3272 (394 aa).

Residue D175 is the Nucleophile of the active site.

The protein belongs to the CoA-transferase III family. In terms of assembly, homodimer.

Its function is as follows. Probably involved in fatty acid metabolism. Binds to fatty acyl-CoAs of varying carbon chain lengths, with the highest binding affinity for palmitoyl-CoA (C16:0). In vitro, alters the cell wall lipid profile and protects mycobacteria from acidic, oxidative and antibiotic stress. May play a significant role in host-pathogen interaction. The chain is Probable fatty acyl-CoA transferase Rv3272 from Mycobacterium tuberculosis (strain ATCC 25618 / H37Rv).